We begin with the raw amino-acid sequence, 205 residues long: Peptidyl-tRNA hydrolase (205 aa).

Tyr-18 serves as a coordination point for tRNA. The active-site Proton acceptor is His-23. 3 residues coordinate tRNA: Tyr-69, Asn-71, and Asn-117.

Belongs to the PTH family. In terms of assembly, monomer.

The protein localises to the cytoplasm. It carries out the reaction an N-acyl-L-alpha-aminoacyl-tRNA + H2O = an N-acyl-L-amino acid + a tRNA + H(+). Functionally, hydrolyzes ribosome-free peptidyl-tRNAs (with 1 or more amino acids incorporated), which drop off the ribosome during protein synthesis, or as a result of ribosome stalling. In terms of biological role, catalyzes the release of premature peptidyl moieties from peptidyl-tRNA molecules trapped in stalled 50S ribosomal subunits, and thus maintains levels of free tRNAs and 50S ribosomes. In Thermosynechococcus vestitus (strain NIES-2133 / IAM M-273 / BP-1), this protein is Peptidyl-tRNA hydrolase.